The primary structure comprises 130 residues: Small ribosomal subunit protein uS9 (130 aa).

It belongs to the universal ribosomal protein uS9 family.

This is Small ribosomal subunit protein uS9 from Geotalea daltonii (strain DSM 22248 / JCM 15807 / FRC-32) (Geobacter daltonii).